The chain runs to 514 residues: Probable E3 ubiquitin-protein ligase ARI10 (514 aa).

Positions 1–18 (MDYSDDDMIDNESGEENN) are enriched in acidic residues. The interval 1-26 (MDYSDDDMIDNESGEENNSDGGGNES) is disordered. The tract at residues 117 to 322 (VDIQCGICFE…SDHYACNNYV (206 aa)) is TRIAD supradomain. Residues Cys-121, Cys-124, Cys-138, His-140, Cys-143, Cys-146, Cys-166, Cys-171, Cys-210, Cys-215, Cys-231, Cys-233, Cys-238, Cys-241, His-246, Cys-251, Cys-278, and Cys-281 each contribute to the Zn(2+) site. Residues 121 to 171 (CGICFESYTRKEIASVSCGHPYCKTCWTGYITTKIEDGPGCLRVKCPEPSC) form an RING-type 1 zinc finger. Residues 190-251 (DKYYRYFLRS…SEDAHSPVDC (62 aa)) form an IBR-type zinc finger. The segment at 278–308 (CPKCKRPIEKSHGCNHMTCSASCGHRFCWIC) adopts an RING-type 2; atypical zinc-finger fold. The active site involves Cys-291. Residues Cys-296, Cys-300, Cys-305, Cys-308, His-315, and Cys-318 each coordinate Zn(2+).

The protein belongs to the RBR family. Ariadne subfamily. Requires Zn(2+) as cofactor.

The catalysed reaction is [E2 ubiquitin-conjugating enzyme]-S-ubiquitinyl-L-cysteine + [acceptor protein]-L-lysine = [E2 ubiquitin-conjugating enzyme]-L-cysteine + [acceptor protein]-N(6)-ubiquitinyl-L-lysine.. It functions in the pathway protein modification; protein ubiquitination. Its function is as follows. Might act as an E3 ubiquitin-protein ligase, or as part of E3 complex, which accepts ubiquitin from specific E2 ubiquitin-conjugating enzymes and then transfers it to substrates. This is Probable E3 ubiquitin-protein ligase ARI10 (ARI10) from Arabidopsis thaliana (Mouse-ear cress).